A 426-amino-acid polypeptide reads, in one-letter code: Glucose-1-phosphate adenylyltransferase (426 aa).

Residues Y100, G165, 180–181, and S191 each bind alpha-D-glucose 1-phosphate; that span reads EK.

The protein belongs to the bacterial/plant glucose-1-phosphate adenylyltransferase family. In terms of assembly, homotetramer.

The enzyme catalyses alpha-D-glucose 1-phosphate + ATP + H(+) = ADP-alpha-D-glucose + diphosphate. It functions in the pathway glycan biosynthesis; glycogen biosynthesis. Functionally, involved in the biosynthesis of ADP-glucose, a building block required for the elongation reactions to produce glycogen. Catalyzes the reaction between ATP and alpha-D-glucose 1-phosphate (G1P) to produce pyrophosphate and ADP-Glc. The polypeptide is Glucose-1-phosphate adenylyltransferase (Acetivibrio thermocellus (strain ATCC 27405 / DSM 1237 / JCM 9322 / NBRC 103400 / NCIMB 10682 / NRRL B-4536 / VPI 7372) (Clostridium thermocellum)).